A 357-amino-acid polypeptide reads, in one-letter code: Sorbitol dehydrogenase (357 aa).

The residue at position 2 (Ala-2) is an N-acetylalanine. Cys-45 contributes to the Zn(2+) binding site. Residue Tyr-51 coordinates substrate. Residues His-70 and Glu-71 each contribute to the Zn(2+) site. Glu-156 serves as a coordination point for substrate. Residues Ile-184, Asp-204, and Arg-209 each contribute to the NAD(+) site. Ser-211 and Ser-225 each carry phosphoserine. Residues 273–275 (VGL) and 297–299 (VFR) contribute to the NAD(+) site. Residues Arg-299 and Tyr-300 each contribute to the substrate site.

It belongs to the zinc-containing alcohol dehydrogenase family. Homotetramer. Requires Zn(2+) as cofactor. As to expression, expressed in liver. Expressed in kidney and epithelial cells of both benign and malignant prostate tissue. Expressed in epididymis (at protein level).

It localises to the mitochondrion membrane. Its subcellular location is the cell projection. It is found in the cilium. The protein resides in the flagellum. The catalysed reaction is keto-D-fructose + NADH + H(+) = D-sorbitol + NAD(+). It catalyses the reaction L-threitol + NAD(+) = L-erythrulose + NADH + H(+). It carries out the reaction xylitol + NAD(+) = D-xylulose + NADH + H(+). The enzyme catalyses ribitol + NAD(+) = D-ribulose + NADH + H(+). The catalysed reaction is (R,R)-butane-2,3-diol + NAD(+) = (R)-acetoin + NADH + H(+). It catalyses the reaction L-iditol + NAD(+) = keto-L-sorbose + NADH + H(+). Its activity is regulated as follows. Inhibited by CP-166,572, an inhibitor that is competitive with fructose. Also competitively inhibited by phenanthroline and 4-methylpyrazole in vitro. Functionally, polyol dehydrogenase that catalyzes the reversible NAD(+)-dependent oxidation of various sugar alcohols. Is mostly active with D-sorbitol (D-glucitol), L-threitol, xylitol and ribitol as substrates, leading to the C2-oxidized products D-fructose, L-erythrulose, D-xylulose, and D-ribulose, respectively. Is a key enzyme in the polyol pathway that interconverts glucose and fructose via sorbitol, which constitutes an important alternate route for glucose metabolism. The polyol pathway is believed to be involved in the etiology of diabetic complications, such as diabetic neuropathy and retinopathy, induced by hyperglycemia. May play a role in sperm motility by using sorbitol as an alternative energy source for sperm motility. May have a more general function in the metabolism of secondary alcohols since it also catalyzes the stereospecific oxidation of (2R,3R)-2,3-butanediol. To a lesser extent, can also oxidize L-arabinitol, galactitol and D-mannitol and glycerol in vitro. Oxidizes neither ethanol nor other primary alcohols. Cannot use NADP(+) as the electron acceptor. The sequence is that of Sorbitol dehydrogenase (SORD) from Homo sapiens (Human).